The following is a 436-amino-acid chain: Histidinol dehydrogenase (436 aa).

NAD(+) contacts are provided by Tyr135, Gln197, and Asn220. The substrate site is built by Thr243, Gln265, and His268. Positions 265 and 268 each coordinate Zn(2+). Residues Glu334 and His335 each act as proton acceptor in the active site. Substrate is bound by residues His335, Asp368, Glu422, and His427. Asp368 contacts Zn(2+). Zn(2+) is bound at residue His427.

This sequence belongs to the histidinol dehydrogenase family. Requires Zn(2+) as cofactor.

It carries out the reaction L-histidinol + 2 NAD(+) + H2O = L-histidine + 2 NADH + 3 H(+). It functions in the pathway amino-acid biosynthesis; L-histidine biosynthesis; L-histidine from 5-phospho-alpha-D-ribose 1-diphosphate: step 9/9. Catalyzes the sequential NAD-dependent oxidations of L-histidinol to L-histidinaldehyde and then to L-histidine. This is Histidinol dehydrogenase from Deinococcus radiodurans (strain ATCC 13939 / DSM 20539 / JCM 16871 / CCUG 27074 / LMG 4051 / NBRC 15346 / NCIMB 9279 / VKM B-1422 / R1).